We begin with the raw amino-acid sequence, 63 residues long: Large ribosomal subunit protein bL28 (63 aa).

Belongs to the bacterial ribosomal protein bL28 family.

The chain is Large ribosomal subunit protein bL28 from Citrifermentans bemidjiense (strain ATCC BAA-1014 / DSM 16622 / JCM 12645 / Bem) (Geobacter bemidjiensis).